A 493-amino-acid polypeptide reads, in one-letter code: Dipeptide permease D (493 aa).

A run of 13 helical transmembrane segments spans residues 14–34, 49–69, 91–111, 138–158, 167–187, 212–232, 235–255, 267–287, 312–332, 344–364, 379–399, 413–433, and 458–478; these read VVAL…LLIL, ELFS…GYLA, LVLG…AIIV, GGFS…PIAC, WAMG…IFLC, NWGW…VLFW, WSVY…AKIY, LGLI…AQQG, MFQS…AWLV, IWGK…ILTL, LMVL…PVAM, VLTG…AGVI, and VFEQ…LIWL.

Belongs to the major facilitator superfamily. Proton-dependent oligopeptide transporter (POT/PTR) (TC 2.A.17) family. DtpD subfamily.

It localises to the cell inner membrane. Functionally, probable proton-dependent permease that transports dipeptides. The protein is Dipeptide permease D of Salmonella typhimurium (strain 14028s / SGSC 2262).